The sequence spans 108 residues: Large ribosomal subunit protein uL24 (108 aa).

This sequence belongs to the universal ribosomal protein uL24 family. Part of the 50S ribosomal subunit.

Functionally, one of two assembly initiator proteins, it binds directly to the 5'-end of the 23S rRNA, where it nucleates assembly of the 50S subunit. One of the proteins that surrounds the polypeptide exit tunnel on the outside of the subunit. The sequence is that of Large ribosomal subunit protein uL24 from Geotalea daltonii (strain DSM 22248 / JCM 15807 / FRC-32) (Geobacter daltonii).